The chain runs to 327 residues: DNA-directed RNA polymerase subunit alpha (327 aa).

Residues Met1–Ser231 form an alpha N-terminal domain (alpha-NTD) region. The segment at Met252–Lys327 is alpha C-terminal domain (alpha-CTD).

Belongs to the RNA polymerase alpha chain family. In terms of assembly, homodimer. The RNAP catalytic core consists of 2 alpha, 1 beta, 1 beta' and 1 omega subunit. When a sigma factor is associated with the core the holoenzyme is formed, which can initiate transcription.

It carries out the reaction RNA(n) + a ribonucleoside 5'-triphosphate = RNA(n+1) + diphosphate. Its function is as follows. DNA-dependent RNA polymerase catalyzes the transcription of DNA into RNA using the four ribonucleoside triphosphates as substrates. The chain is DNA-directed RNA polymerase subunit alpha from Pelodictyon phaeoclathratiforme (strain DSM 5477 / BU-1).